A 131-amino-acid chain; its full sequence is Antitoxin MqsA (131 aa).

Zn(2+) is bound by residues cysteine 3, cysteine 6, cysteine 37, and cysteine 40. An HTH cro/C1-type domain is found at 74–127 (IVKVRKKLSLTQKEASEIFGGGVNAFSRYEKGNAQPHPSTIKLLRVLDKHPELL). The segment at residues 85–104 (QKEASEIFGGGVNAFSRYEK) is a DNA-binding region (H-T-H motif).

Homodimer. Crystallizes as a heterotetramer with MqsA, MqsR-MqsA(2)-MqsR. Purifies as a probable heterohexamer of 2 MqsR dimers and 1 MqsA dimer. Binds promoter DNA as a dimer. When the 2 dissociate the MsqR mRNA interferase becomes active. Zn(2+) is required as a cofactor. In terms of processing, degraded in the presence of oxidative stress, maybe by the Lon and/or ClpX proteases.

Its function is as follows. Antitoxin component of a type II toxin-antitoxin (TA) system. Labile antitoxin that binds to the MqsR mRNA interferase toxin and neutralizes its endoribonuclease activity. Overexpression prevents MqsR-mediated cessation of cell growth and inhibition of cell proliferation. Initially reported to act as a cotranscription factor with MqsA. Following further experiments, the MqsR-MqsA complex does not bind DNA and all reported data are actually due to a small fraction of free MqsA alone binding DNA. Addition of MqsR to a preformed MqsA-promoter DNA complex causes dissociation of the MqsA-DNA complex, probably causing derepression of MqsA-repressed transcripts. MqsA binds to 2 palindromes in the promoter region of the mqsRA operon activating its transcription. Binds to other promoters, inducing mcbR and spy and repressing cspD among others. Binds to and represses the rpoS promoter, the master stress regulator, resulting in decreased cyclic-di-GMP, reduced stress resistance, increased cell motility and decreased biofilm formation; in these experiments 5 TA systems are missing (lacks MazEF, RelEB, ChpB, YoeB-YefM, YafQ-DinJ). An earlier study showed overexpression alone increases biofilm formation, perhaps by repressing cspD; in these experiments the 5 TA systems are present. Represses the csgD promoter. In the presence of stress, when this protein is degraded, the promoters it represses are derepressed, leading to biofilm formation. This TA system mediates cell growth during bile acid deoxycholate stress by degrading mRNA for probable deoxycholate-binding protein YgiS; bile acid detergents such as deoxycholate are important for host defense against bacterial growth in the gall bladder and duodenum. The chain is Antitoxin MqsA from Escherichia coli (strain K12).